Reading from the N-terminus, the 411-residue chain is L-cysteine:1D-myo-inositol 2-amino-2-deoxy-alpha-D-glucopyranoside ligase (411 aa).

Cys43 is a binding site for Zn(2+). L-cysteinyl-5'-AMP contacts are provided by residues 43-46 (CGIT), Thr58, and 81-83 (NVT). Residues 45–55 (ITPYDATHLGH) carry the 'HIGH' region motif. Residues 186–191 (QRGGDP) carry the 'ERGGDP' region motif. L-cysteinyl-5'-AMP is bound at residue Trp226. Cys230 contributes to the Zn(2+) binding site. 248–250 (GSD) serves as a coordination point for L-cysteinyl-5'-AMP. A Zn(2+)-binding site is contributed by His255. Ile282 is an L-cysteinyl-5'-AMP binding site. Positions 288–292 (KMSKS) match the 'KMSKS' region motif.

Belongs to the class-I aminoacyl-tRNA synthetase family. MshC subfamily. As to quaternary structure, monomer. It depends on Zn(2+) as a cofactor.

The catalysed reaction is 1D-myo-inositol 2-amino-2-deoxy-alpha-D-glucopyranoside + L-cysteine + ATP = 1D-myo-inositol 2-(L-cysteinylamino)-2-deoxy-alpha-D-glucopyranoside + AMP + diphosphate + H(+). Functionally, catalyzes the ATP-dependent condensation of GlcN-Ins and L-cysteine to form L-Cys-GlcN-Ins. The chain is L-cysteine:1D-myo-inositol 2-amino-2-deoxy-alpha-D-glucopyranoside ligase from Mycobacterium ulcerans (strain Agy99).